Reading from the N-terminus, the 234-residue chain is MTNQLIYKGKAKDIYSTKDENVIRTVYKDQATMLNGARKETIDGKGALNNQISSLIFEKLNKAGVATHYIEQISKNEQLNKKVDIIPLEVVLRNVTAGSFSKRFGVEEGRVLETPIVEFYYKNDDLNDPFINDEHVKFLGIVNDEEIAYLKGETRRINELLKCWFAQIGLNLIDFKLEFGFDQEGTIILADEFSPDNCRLWDKNGNHMDKDVFRRDLGNLTDVYQVVLEKLIAL.

It belongs to the SAICAR synthetase family.

It catalyses the reaction 5-amino-1-(5-phospho-D-ribosyl)imidazole-4-carboxylate + L-aspartate + ATP = (2S)-2-[5-amino-1-(5-phospho-beta-D-ribosyl)imidazole-4-carboxamido]succinate + ADP + phosphate + 2 H(+). Its pathway is purine metabolism; IMP biosynthesis via de novo pathway; 5-amino-1-(5-phospho-D-ribosyl)imidazole-4-carboxamide from 5-amino-1-(5-phospho-D-ribosyl)imidazole-4-carboxylate: step 1/2. In Streptococcus pyogenes serotype M3 (strain ATCC BAA-595 / MGAS315), this protein is Phosphoribosylaminoimidazole-succinocarboxamide synthase.